The chain runs to 523 residues: Lysine--tRNA ligase (523 aa).

A 'HIGH' region motif is present at residues 30 to 38; the sequence is PSGYVHVGN. Zn(2+) is bound by residues D95, C99, H100, H106, C177, H180, C199, and H203. Residues 279–283 carry the 'KMSKS' region motif; that stretch reads KMSGS.

Belongs to the class-I aminoacyl-tRNA synthetase family. It depends on Zn(2+) as a cofactor.

It is found in the cytoplasm. It catalyses the reaction tRNA(Lys) + L-lysine + ATP = L-lysyl-tRNA(Lys) + AMP + diphosphate. The protein is Lysine--tRNA ligase (lysS) of Pyrococcus furiosus (strain ATCC 43587 / DSM 3638 / JCM 8422 / Vc1).